The chain runs to 343 residues: NADH dehydrogenase [ubiquinone] 1 alpha subcomplex subunit 10, mitochondrial (343 aa).

Residues Met1–Lys23 constitute a mitochondrion transit peptide. Lys110 bears the N6-acetyllysine; alternate mark. Lys110 is modified (N6-succinyllysine; alternate). Ser238 carries the phosphoserine; by PINK1 modification.

This sequence belongs to the complex I NDUFA10 subunit family. Complex I is composed of 45 different subunits. This a component of the hydrophobic protein fraction. It depends on FAD as a cofactor. Phosphorylation at Ser-238 by PINK1 is required for the binding and/or reduction of the complex I substrate ubiquinone.

The protein localises to the mitochondrion matrix. In terms of biological role, accessory subunit of the mitochondrial membrane respiratory chain NADH dehydrogenase (Complex I), that is believed not to be involved in catalysis. Complex I functions in the transfer of electrons from NADH to the respiratory chain. The immediate electron acceptor for the enzyme is believed to be ubiquinone. The chain is NADH dehydrogenase [ubiquinone] 1 alpha subcomplex subunit 10, mitochondrial (NDUFA10) from Bos taurus (Bovine).